The primary structure comprises 243 residues: Terpene cyclase paxB (243 aa).

The next 7 helical transmembrane spans lie at 23 to 43, 49 to 69, 78 to 98, 112 to 132, 134 to 154, 172 to 194, and 205 to 225; these read FVVGMGVGWIINYIGMVYISF, GMSIMPLCCNIAWELVYCLVF, GVFWMGLLINFGVMYAAITFS, ISLIFFVATMGFLSGHVALAL, IGPALAYSWGAVICQLLLSVG, LWASRFLGSTCTVGFAGLRWMYW, and LVLWSLVVFLSIDGFYGICFW.

It belongs to the paxB family.

The protein resides in the membrane. The protein operates within secondary metabolite biosynthesis. Functionally, terpene cyclase; part of the ATM2 gene cluster that mediates the biosynthesis of paxilline, a mycotoxin that acts as an inhibitor of mammalian maxi-K channels. PaxG, the geranylgeranyl diphosphate (GGPP) synthase is proposed to catalyze the first step in paxilline biosynthesis. Condensation of indole-3-glycerol phosphate with GGPP by paxC then forms 3-geranylgeranylindole (3-GGI), followed by epoxidation and cyclization of this intermediate (by paxM and paxB) to form paspaline. Paspaline is subsequently converted to 13-desoxypaxilline by paxP, the latter being then converted to paxilline by paxQ. Finally paxilline can be mono- and di-prenylated by paxD. The sequence is that of Terpene cyclase paxB from Penicillium paxilli.